Consider the following 279-residue polypeptide: Undecaprenyl-diphosphatase (279 aa).

A run of 8 helical transmembrane segments spans residues 2-22 (LIIELLKAIFFGIIEGITEWL), 44-64 (AFIEMFNIVIQLGAIIAVMLI), 85-105 (WQLWLKVVIACIPSILIAVPL), 113-133 (FYFMVPIAIALIVYGIAFIWI), 163-183 (VLSIVPGTSRSGATILGAIIL), 188-208 (TVAADFTFFLAIPTMFGYSGL), 223-243 (AQVLILLVASLTAFVVSLLAI), and 255-275 (FTIFGKYRIVLGSLLLIYSFF).

It belongs to the UppP family.

The protein resides in the cell membrane. The enzyme catalyses di-trans,octa-cis-undecaprenyl diphosphate + H2O = di-trans,octa-cis-undecaprenyl phosphate + phosphate + H(+). Catalyzes the dephosphorylation of undecaprenyl diphosphate (UPP). Confers resistance to bacitracin. This is Undecaprenyl-diphosphatase from Streptococcus pyogenes serotype M2 (strain MGAS10270).